A 466-amino-acid polypeptide reads, in one-letter code: 3-isopropylmalate dehydratase large subunit (466 aa).

[4Fe-4S] cluster is bound by residues Cys347, Cys407, and Cys410.

Belongs to the aconitase/IPM isomerase family. LeuC type 1 subfamily. As to quaternary structure, heterodimer of LeuC and LeuD. It depends on [4Fe-4S] cluster as a cofactor.

The catalysed reaction is (2R,3S)-3-isopropylmalate = (2S)-2-isopropylmalate. Its pathway is amino-acid biosynthesis; L-leucine biosynthesis; L-leucine from 3-methyl-2-oxobutanoate: step 2/4. Functionally, catalyzes the isomerization between 2-isopropylmalate and 3-isopropylmalate, via the formation of 2-isopropylmaleate. This chain is 3-isopropylmalate dehydratase large subunit, found in Salmonella paratyphi A (strain ATCC 9150 / SARB42).